A 51-amino-acid polypeptide reads, in one-letter code: Large ribosomal subunit protein eL39 (51 aa).

The protein belongs to the eukaryotic ribosomal protein eL39 family. As to quaternary structure, component of the large ribosomal subunit. Interacts with IMPACT.

It localises to the cytoplasm. Functionally, RNA-binding component of the large ribosomal subunit. The ribosome is a large ribonucleoprotein complex responsible for the synthesis of proteins in the cell. This Mus musculus (Mouse) protein is Large ribosomal subunit protein eL39 (Rpl39).